The sequence spans 729 residues: Neurochondrin (729 aa).

S2 bears the N-acetylserine mark. The residue at position 2 (S2) is a Phosphoserine. S2 is subject to N-acetylalanine. Residues C3 and C4 are each lipidated (S-palmitoyl cysteine). Position 75 is an asymmetric dimethylarginine (R75). S448 carries the post-translational modification Phosphoserine.

This sequence belongs to the neurochondrin family. As to quaternary structure, interacts with MCHR1. Interacts with SEMA4C. Interacts with DIAPH1 (via FH3 domain). Interacts with GRM5. In terms of processing, palmitoylated. Palmitoylation by ZDHHC1, ZDHHC3 and ZDHHC11 regulates the association of NCDN with endosome membranes. May also be palmitoylated by ZDHHC7. Abundantly expressed in whole adult brain and in all individual brain regions examined, including spinal cord. Weakly expressed in ovary, testis, fetal brain and small intestine.

The protein localises to the cytoplasm. Its subcellular location is the cytosol. It localises to the endosome membrane. It is found in the cell projection. The protein resides in the dendrite. The protein localises to the postsynapse. Its function is as follows. Probably involved in signal transduction in the nervous system, via increasing cell surface localization of GRM5/mGluR5 and positively regulating its signaling. Required for the spatial learning process. Acts as a negative regulator of Ca(2+)-calmodulin-dependent protein kinase 2 (CaMK2) phosphorylation. May play a role in modulating melanin-concentrating hormone-mediated functions via its interaction with MCHR1 that interferes with G protein-coupled signal transduction. May be involved in bone metabolism. May also be involved in neurite outgrowth. The polypeptide is Neurochondrin (Homo sapiens (Human)).